The sequence spans 566 residues: OTU domain-containing protein 5 (566 aa).

Disordered regions lie at residues 1-117 (MTIL…GDAL) and 146-175 (PGHS…GAGY). Over residues 11–30 (PPDADPANEPPPPGPLPPAP) the composition is skewed to pro residues. A compositionally biased stretch (gly residues) spans 32–47 (RGGGVGVGGGGTGVGG). The segment covering 63 to 75 (ASPPPQGPLPGPP) has biased composition (pro residues). S64 carries the post-translational modification Phosphoserine. The span at 84–97 (AVPPGAVAGPRPQQ) shows a compositional bias: low complexity. Residues 105 to 115 (GPGGPGGGPGD) are compositionally biased toward gly residues. At S165 the chain carries Phosphoserine. Y175 is subject to Phosphotyrosine. Residue S177 is modified to Phosphoserine. T195 carries the phosphothreonine modification. In terms of domain architecture, OTU spans 213-336 (FIIKQMKEDG…NIHYNSVVNP (124 aa)). Residues 218 to 224 (MKEDGAC) form a cys-loop region. D221 is a catalytic residue. C224 acts as the Nucleophile in catalysis. A variable-loop region spans residues 273–283 (KRKNNCHGNHI). S323 carries the post-translational modification Phosphoserine. The his-loop stretch occupies residues 324 to 329 (YHRNIH). Residue H329 is part of the active site. Residues S332 and S370 each carry the phosphoserine modification. The segment at 413–497 (ARQVRGPSQP…PGTSSQFSAG (85 aa)) is disordered. Low complexity-rich tracts occupy residues 425 to 438 (ASAT…AASS) and 445 to 457 (SRSP…ASSP). S447 carries the phosphoserine modification. Position 502 is a phosphothreonine (T502). A Phosphoserine modification is found at S503.

Belongs to the peptidase C85 family. Interacts with TRAF3. Post-translationally, phosphorylation at Ser-177 is required for deubiquitinating activity. Phosphorylation at Ser-323, Ser-332 and Ser-503 by MTOR promotes its activity.

Its subcellular location is the nucleus. It catalyses the reaction Thiol-dependent hydrolysis of ester, thioester, amide, peptide and isopeptide bonds formed by the C-terminal Gly of ubiquitin (a 76-residue protein attached to proteins as an intracellular targeting signal).. With respect to regulation, inhibited by N-ethyl-maleimide (NEM). Its function is as follows. Deubiquitinating enzyme that functions as a negative regulator of the innate immune system. Has peptidase activity towards 'Lys-48'- and 'Lys-63'-linked polyubiquitin chains. Can also cleave 'Lys-11'-linked ubiquitin chains (in vitro). Acts via TRAF3 deubiquitination and subsequent suppression of type I interferon (IFN) production. Controls neuroectodermal differentiation through cleaving 'Lys-48'-linked ubiquitin chains to counteract degradation of select chromatin regulators such as ARID1A, HDAC2 and HCF1. Acts as a positive regulator of mTORC1 and mTORC2 signaling following phosphorylation by MTOR: acts by mediating deubiquitination of BTRC, leading to its stability. This Rattus norvegicus (Rat) protein is OTU domain-containing protein 5.